A 504-amino-acid chain; its full sequence is Ribose import ATP-binding protein RbsA 3 (504 aa).

2 ABC transporter domains span residues 6 to 238 (ANLK…VGRP) and 251 to 494 (IGAE…MMGG). Residue 38–45 (GENGAGKS) participates in ATP binding.

Belongs to the ABC transporter superfamily. Ribose importer (TC 3.A.1.2.1) family. As to quaternary structure, the complex is composed of an ATP-binding protein (RbsA), two transmembrane proteins (RbsC) and a solute-binding protein (RbsB).

The protein resides in the cell inner membrane. The enzyme catalyses D-ribose(out) + ATP + H2O = D-ribose(in) + ADP + phosphate + H(+). In terms of biological role, part of the ABC transporter complex RbsABC involved in ribose import. Responsible for energy coupling to the transport system. This chain is Ribose import ATP-binding protein RbsA 3, found in Rhizobium meliloti (strain 1021) (Ensifer meliloti).